Consider the following 205-residue polypeptide: Recombination protein RecR (205 aa).

The C4-type zinc-finger motif lies at 59–74 (CSVCFHLSAEPVCEVC). A Toprim domain is found at 82–181 (GTLCVVADSR…KVTRIAFGLP (100 aa)).

It belongs to the RecR family.

Its function is as follows. May play a role in DNA repair. It seems to be involved in an RecBC-independent recombinational process of DNA repair. It may act with RecF and RecO. This chain is Recombination protein RecR, found in Cyanothece sp. (strain PCC 7425 / ATCC 29141).